Here is a 1663-residue protein sequence, read N- to C-terminus: Kotanin synthase (1663 aa).

The segment at 19-168 (RPHEFSFNTQ…PLPVYGGPCH (150 aa)) is N-terminal acylcarrier protein transacylase domain (SAT). Residues 301 to 731 (DSRIAVVGMS…GGNTSLLLEE (431 aa)) enclose the Ketosynthase family 3 (KS3) domain. Catalysis depends on for beta-ketoacyl synthase activity residues Cys474, His609, and His650. The segment at 830–1149 (FIFSGQGSFY…SMCTLQETGV (320 aa)) is malonyl-CoA:ACP transacylase (MAT) domain. Residues 1209-1527 (TALVHQIMEE…PRILMNRFFD (319 aa)) form a product template (PT) domain region. The tract at residues 1213–1349 (HQIMEESFRP…GVVRCGDRQS (137 aa)) is N-terminal hotdog fold. Residues 1213-1523 (HQIMEESFRP…LRPLPRILMN (311 aa)) form the PKS/mFAS DH domain. The active-site Proton acceptor; for dehydratase activity is His1245. The tract at residues 1376–1523 (QASRVSRDLV…LRPLPRILMN (148 aa)) is C-terminal hotdog fold. Asp1434 serves as the catalytic Proton donor; for dehydratase activity. A disordered region spans residues 1544 to 1580 (DLPQVQHQPSPTTDSGPDDDPKDPNTGPLTPEVDLPV). The 78-residue stretch at 1586–1663 (KANTKLVRGA…ELKEYLTASW (78 aa)) folds into the Carrier domain. The residue at position 1623 (Ser1623) is an O-(pantetheine 4'-phosphoryl)serine.

Requires pantetheine 4'-phosphate as cofactor.

The protein operates within secondary metabolite biosynthesis. Its function is as follows. Non-reducing polyketide synthase; part of the gene cluster that mediates the biosynthesis of the bicoumarin kotanin. The non-reducing polyketide synthase ktnS first catalyzes the formation of the pentaketidic 4,7-dihydroxy-5-methylcoumarin from acetyl coenzyme A and 4 malonyl coenzyme A molecules. Further O-methylation by ktnB leads to the formation of 7-demethylsiderin. Then, an oxidative phenol coupling catalyzed by the cytochrome P450 monooxygenase ktnC forms the 8,8'-dimer P-orlandin via dimerization the monomeric precursor, 7-demethylsiderin. P-orlandin is subsequently O-methylated in a stepwise fashion to demethylkotanin and kotanin. This Aspergillus niger (strain ATCC MYA-4892 / CBS 513.88 / FGSC A1513) protein is Kotanin synthase.